A 68-amino-acid polypeptide reads, in one-letter code: Large ribosomal subunit protein uL29 (68 aa).

Belongs to the universal ribosomal protein uL29 family.

This chain is Large ribosomal subunit protein uL29 (rpl29), found in Archaeoglobus fulgidus (strain ATCC 49558 / DSM 4304 / JCM 9628 / NBRC 100126 / VC-16).